The sequence spans 570 residues: Adenine deaminase (570 aa).

It belongs to the metallo-dependent hydrolases superfamily. Adenine deaminase family. Mn(2+) serves as cofactor.

It catalyses the reaction adenine + H2O + H(+) = hypoxanthine + NH4(+). The polypeptide is Adenine deaminase (Clostridium acetobutylicum (strain ATCC 824 / DSM 792 / JCM 1419 / IAM 19013 / LMG 5710 / NBRC 13948 / NRRL B-527 / VKM B-1787 / 2291 / W)).